The primary structure comprises 268 residues: Putative carbamate hydrolase RutD (268 aa).

An AB hydrolase-1 domain is found at 24 to 243 (VILSAGLGGS…NATLDIAPWG (220 aa)).

This sequence belongs to the AB hydrolase superfamily. Hydrolase RutD family.

The enzyme catalyses carbamate + 2 H(+) = NH4(+) + CO2. Its function is as follows. Involved in pyrimidine catabolism. May facilitate the hydrolysis of carbamate, a reaction that can also occur spontaneously. The polypeptide is Putative carbamate hydrolase RutD (Caulobacter sp. (strain K31)).